The sequence spans 515 residues: Maturase K (515 aa).

It belongs to the intron maturase 2 family. MatK subfamily.

The protein resides in the plastid. The protein localises to the chloroplast. In terms of biological role, usually encoded in the trnK tRNA gene intron. Probably assists in splicing its own and other chloroplast group II introns. This chain is Maturase K, found in Pinus clausa (Sand pine).